The chain runs to 648 residues: Macrolide export ATP-binding/permease protein MacB (648 aa).

The ABC transporter domain maps to 5–243; sequence LELCNVSRSY…QGVDAAVVNT (239 aa). 41 to 48 serves as a coordination point for ATP; it reads GVSGSGKS. 5 consecutive transmembrane segments (helical) span residues 273 to 293, 417 to 437, 523 to 543, 577 to 597, and 611 to 631; these read LLTM…VVVG, ANVV…IGVA, LFLT…VMNI, VLVC…IAFM, and LTAL…FGWL.

It belongs to the ABC transporter superfamily. Macrolide exporter (TC 3.A.1.122) family. As to quaternary structure, homodimer. Part of the tripartite efflux system MacAB-TolC, which is composed of an inner membrane transporter, MacB, a periplasmic membrane fusion protein, MacA, and an outer membrane component, TolC. The complex forms a large protein conduit and can translocate molecules across both the inner and outer membranes. Interacts with MacA.

The protein resides in the cell inner membrane. Part of the tripartite efflux system MacAB-TolC. MacB is a non-canonical ABC transporter that contains transmembrane domains (TMD), which form a pore in the inner membrane, and an ATP-binding domain (NBD), which is responsible for energy generation. Confers resistance against macrolides. The protein is Macrolide export ATP-binding/permease protein MacB of Salmonella choleraesuis (strain SC-B67).